We begin with the raw amino-acid sequence, 2193 residues long: Highly reducing polyketide synthase VdtX (2193 aa).

The Ketosynthase family 3 (KS3) domain occupies 1-417 (MAICGIAVRL…GVNAHVIIES (417 aa)). Active-site for beta-ketoacyl synthase activity residues include Cys170, His306, and His340. Positions 513–809 (VFAGQGAQWP…HPYVPCLIRF (297 aa)) are malonyl-CoA:ACP transacylase (MAT) domain. The segment at 877–1001 (HELLGTRVVD…GEVAQENLSR (125 aa)) is N-terminal hotdog fold. Positions 877–1128 (HELLGTRVVD…DIVLRPLGAN (252 aa)) are dehydratase (DH) domain. Positions 877–1202 (HELLGTRVVD…LQRQPKPSSE (326 aa)) constitute a PKS/mFAS DH domain. His909 acts as the Proton acceptor; for dehydratase activity in catalysis. The interval 1032 to 1202 (SVTSNTVSGR…LQRQPKPSSE (171 aa)) is C-terminal hotdog fold. Catalysis depends on Asp1093, which acts as the Proton donor; for dehydratase activity. Residues 1256–1390 (NYLNEPQQRI…DRWDSILKAA (135 aa)) form a methyltransferase (CMet) domain region. The interval 1575-1783 (GQQVQLLGDD…SGQHIGQLRL (209 aa)) is enoyl reductase (ER) domain. The ketoreductase (KR) domain stretch occupies residues 1807–1981 (ASYLLVGGLG…ASVIDIGEVQ (175 aa)). A Carrier domain is found at 2102-2183 (PSATQFVSLE…AMGEHVIREL (82 aa)). Position 2143 is an O-(pantetheine 4'-phosphoryl)serine (Ser2143).

In terms of biological role, highly reducing polyketide synthase; part of the gene cluster that mediates the biosynthesis of viriditoxin, one of the 'classical' secondary metabolites produced by fungi and that has antibacterial activity. The first step is performed by the polyketide synthase VdtA which condenses one acetyl-CoA and 6 malonyl-CoA units to form the heptaketide monomer backbone of viriditoxin. The product of VdtA is then O-methylated on C7 by the O-methyltransferase VdtC. The O-methyl group is important for the stereoselective coupling of the monomers at the final step of viriditoxin biosynthesis. The short-chain dehydrogenase/reductase VdtF is involved in the reduction of the C3-C4 double bond. The FAD-binding monooxygenase VdtE then converts the ketone group into a methyl-ester group to yield semi-viriditoxin. Finally, the laccase VdtB is involved in dimerization of 2 semi-viriditoxin molecules to yield the final viriditoxin. The non-catalytic carboxylesterase-like protein VdtD affects the stereochemistical outcome of the coupling. The highly reducing polyketide synthase VdtX is not involved in viriditoxin synthesis, but might possibly play a role in the production of additional metabolites not identified yet. The sequence is that of Highly reducing polyketide synthase VdtX from Byssochlamys spectabilis (Paecilomyces variotii).